Here is a 150-residue protein sequence, read N- to C-terminus: MRTVTQRVQHASVTIDGQLKSKIGKGLLVLVGIEDKDTQEDIEWLAKKITNLRIFDDENGVMNRSVIEAGGEIMVVSQFTLHASTKKGNRPSYLKASKPDIAIPMYKAFCEEVGLQLGKPVQTGTFGADMKIELLNDGPVTIIIDSQNKE.

A Gly-cisPro motif, important for rejection of L-amino acids motif is present at residues Gly-138–Pro-139.

It belongs to the DTD family. As to quaternary structure, homodimer.

The protein localises to the cytoplasm. It carries out the reaction glycyl-tRNA(Ala) + H2O = tRNA(Ala) + glycine + H(+). The enzyme catalyses a D-aminoacyl-tRNA + H2O = a tRNA + a D-alpha-amino acid + H(+). In terms of biological role, an aminoacyl-tRNA editing enzyme that deacylates mischarged D-aminoacyl-tRNAs. Also deacylates mischarged glycyl-tRNA(Ala), protecting cells against glycine mischarging by AlaRS. Acts via tRNA-based rather than protein-based catalysis; rejects L-amino acids rather than detecting D-amino acids in the active site. By recycling D-aminoacyl-tRNA to D-amino acids and free tRNA molecules, this enzyme counteracts the toxicity associated with the formation of D-aminoacyl-tRNA entities in vivo and helps enforce protein L-homochirality. The polypeptide is D-aminoacyl-tRNA deacylase (Parabacteroides distasonis (strain ATCC 8503 / DSM 20701 / CIP 104284 / JCM 5825 / NCTC 11152)).